Reading from the N-terminus, the 109-residue chain is Flagellar hook-basal body complex protein FliE (109 aa).

Belongs to the FliE family.

It is found in the bacterial flagellum basal body. The chain is Flagellar hook-basal body complex protein FliE from Pseudomonas paraeruginosa (strain DSM 24068 / PA7) (Pseudomonas aeruginosa (strain PA7)).